The sequence spans 333 residues: Fe(3+)-citrate import system permease protein YfmD (333 aa).

The next 9 helical transmembrane spans lie at 13–33 (LMMF…NLSV), 67–87 (TLIG…MQAM), 97–117 (IFGV…ILPA), 121–141 (SSVI…YMIA), 151–171 (LALS…AIII), 201–221 (FSVI…VLGL), 238–258 (ILIS…AGPI), 279–299 (YVLP…DVLA), and 302–322 (IAFP…TPFF).

It belongs to the binding-protein-dependent transport system permease family. FecCD subfamily. As to quaternary structure, the complex is composed of one ATP-binding protein (YfmF), two transmembrane proteins (YfmD and YfmE) and a solute-binding protein (YfmC).

It is found in the cell membrane. Functionally, part of the ABC transporter complex YfmCDEF involved in citrate-dependent Fe(3+) import. Involved in the translocation of the substrate across the membrane. The chain is Fe(3+)-citrate import system permease protein YfmD (yfmD) from Bacillus subtilis (strain 168).